The chain runs to 81 residues: Conotoxin ArMKLT2-0311 (81 aa).

A signal peptide spans 1-22 (MKLTCVLIVALLFLTACQLTTA). The span at 23-34 (DDSRDKQEDPLV) shows a compositional bias: basic and acidic residues. Residues 23–45 (DDSRDKQEDPLVRSHRKMQKSED) are disordered. Residues 23–51 (DDSRDKQEDPLVRSHRKMQKSEDPKMAER) constitute a propeptide that is removed on maturation. 3 cysteine pairs are disulfide-bonded: Cys52–Cys67, Cys59–Cys71, and Cys66–Cys80.

It belongs to the conotoxin O1 superfamily. In terms of tissue distribution, expressed by the venom duct.

Its subcellular location is the secreted. The protein is Conotoxin ArMKLT2-0311 of Conus arenatus (Sand-dusted cone).